Reading from the N-terminus, the 341-residue chain is Protein BIG GRAIN 1-like C (341 aa).

Disordered regions lie at residues aspartate 28–leucine 61 and serine 76–aspartate 138. Residues asparagine 52–leucine 61 are compositionally biased toward basic and acidic residues. A compositionally biased stretch (low complexity) spans serine 76 to serine 92. Positions lysine 105–aspartate 138 are enriched in basic and acidic residues.

Belongs to the BIG GRAIN 1 (BG1) plant protein family.

It localises to the cell membrane. In terms of biological role, involved in auxin transport. Regulator of the auxin signaling pathway. This chain is Protein BIG GRAIN 1-like C, found in Arabidopsis thaliana (Mouse-ear cress).